Here is a 58-residue protein sequence, read N- to C-terminus: Large ribosomal subunit protein uL30 (58 aa).

This sequence belongs to the universal ribosomal protein uL30 family. Part of the 50S ribosomal subunit.

This Bacteroides thetaiotaomicron (strain ATCC 29148 / DSM 2079 / JCM 5827 / CCUG 10774 / NCTC 10582 / VPI-5482 / E50) protein is Large ribosomal subunit protein uL30.